Consider the following 1170-residue polypeptide: Anion exchange protein 3 (1170 aa).

At 1–656 (MGRSYNEKDF…DLKDALDTQC (656 aa)) the chain is on the cytoplasmic side. Disordered stretches follow at residues 17–96 (FHHT…PQLS), 112–167 (FHME…TTRG), and 239–267 (HLVK…RRKR). Over residues 32–53 (RFRKRVLSMDRRRKRKRKKKKT) the composition is skewed to basic residues. Over residues 67-76 (VDEEEAESEI) the composition is skewed to acidic residues. Over residues 246 to 259 (RCQLPRSSNGSPPL) the composition is skewed to polar residues. 5 helical membrane passes run 657-677 (IAAV…FGGL), 702-722 (FSLL…LLVF), 744-764 (IGFW…SFLV), 774-794 (IFAF…LIKV), and 828-848 (PNTA…AFFL). The interval 657 to 1170 (IAAVIFIYFA…DEYNEIHMLV (514 aa)) is membrane (anion exchange). Over 849 to 863 (RKLRNSRFLGGKVRR) the chain is Cytoplasmic. The next 5 membrane-spanning stretches (helical) occupy residues 864-884 (VIGD…DILI), 919-939 (FPVW…ILIF), 966-986 (LLLI…WLTA), 1020-1063 (RVTG…LTGI), and 1104-1124 (IVLL…FILI).

The protein belongs to the anion exchanger (TC 2.A.31) family. In terms of tissue distribution, widely expressed at low levels.

It is found in the cell membrane. It carries out the reaction hydrogencarbonate(in) + chloride(out) = hydrogencarbonate(out) + chloride(in). In terms of biological role, sodium-independent anion exchanger which mediates the electroneutral exchange of chloride for bicarbonate ions across the cell membrane. May be involved in the regulation of intracellular pH, and the modulation of cardiac action potential. The polypeptide is Anion exchange protein 3 (Danio rerio (Zebrafish)).